We begin with the raw amino-acid sequence, 267 residues long: X-box-binding protein 1 (267 aa).

At methionine 1–asparagine 180 the chain is on the cytoplasmic side. The disordered stretch occupies residues valine 35–leucine 60. Residue serine 61 is modified to Phosphoserine. A bZIP domain is found at glutamate 63–leucine 126. The segment at lysine 65 to arginine 87 is basic motif. The tract at residues arginine 69 to lysine 85 is nuclear localization signal (NLS). The tract at residues leucine 91 to leucine 126 is leucine-zipper. The helical; Signal-anchor for type II membrane protein transmembrane segment at isoleucine 181 to serine 198 threads the bilayer. Topologically, residues phenylalanine 199–leucine 267 are lumenal.

The protein belongs to the bZIP family. As to quaternary structure, isoform 1 interacts with HM13. Isoform 1 interacts with RNF139; the interaction induces ubiquitination and degradation of isoform 1. Isoform 1 interacts (via luminal domain) with DERL1; the interaction obviates the need for ectodomain shedding prior HM13/SPP-mediated XBP1 isoform 1 cleavage. Isoform 1 interacts with HDAC3 and AKT1; the interactions occur in endothelial cell (EC) under disturbed flow. Isoform 1 interacts with the oncoprotein FOS. Interacts with SIRT1. In terms of processing, isoform 1 is ubiquitinated, leading to proteasome-mediated degradation in response to ER stress. Post-translationally, X-box-binding protein 1, cytoplasmic form and luminal form are produced by intramembrane proteolytic cleavage of ER membrane-anchored isoform 1 triggered by HM13/SPP in a DERL1-RNF139-dependent and VCP/p97-independent manner. X-box-binding protein 1, luminal form is ubiquitinated leading to proteasomal degradation. Acetylated by EP300; acetylation positively regulates the transcriptional activity of XBP1. Deacetylated by SIRT1; deacetylation negatively regulates the transcriptional activity of XBP1.

The protein resides in the nucleus. It is found in the endoplasmic reticulum. It localises to the cytoplasm. Its subcellular location is the endoplasmic reticulum membrane. The protein localises to the membrane. In terms of biological role, functions as a transcription factor during endoplasmic reticulum (ER) stress by regulating the unfolded protein response (UPR). Required for cardiac myogenesis and hepatogenesis during embryonic development, and the development of secretory tissues such as exocrine pancreas and salivary gland. Involved in terminal differentiation of B lymphocytes to plasma cells and production of immunoglobulins. Modulates the cellular response to ER stress in a PIK3R-dependent manner. Binds to the cis-acting X box present in the promoter regions of major histocompatibility complex class II genes. Involved in VEGF-induced endothelial cell (EC) proliferation and retinal blood vessel formation during embryonic development but also for angiogenesis in adult tissues under ischemic conditions. Functions also as a major regulator of the UPR in obesity-induced insulin resistance and type 2 diabetes for the management of obesity and diabetes prevention. Functionally, acts as a weak transcriptional factor. Together with HDAC3, contributes to the activation of NFE2L2-mediated HMOX1 transcription factor gene expression in a PI(3)K/mTORC2/Akt-dependent signaling pathway leading to EC survival under disturbed flow/oxidative stress. Binds to the ER stress response element (ERSE) upon ER stress. Binds to the consensus 5'-GATGACGTG[TG]N(3)[AT]T-3' sequence related to cAMP responsive element (CRE)-like sequences. Associates preferentially to the HDAC3 gene promoter region in a static flow-dependent manner. Binds to the CDH5/VE-cadherin gene promoter region. This Rattus norvegicus (Rat) protein is X-box-binding protein 1.